A 217-amino-acid chain; its full sequence is NAD(P)H-quinone oxidoreductase subunit M, chloroplastic (217 aa).

Residues 1 to 21 (MVAAFSYTACTKLSLLHPSMV) constitute a chloroplast transit peptide. The tract at residues 48-67 (ETETLKEEQSTEKMKKQPTP) is disordered. The segment covering 50-62 (ETLKEEQSTEKMK) has biased composition (basic and acidic residues).

It belongs to the NDH complex subunit M family. As to quaternary structure, part of the chloroplast NDH complex, composed of a mixture of chloroplast and nucleus encoded subunits. Component of the NDH subcomplex A, at least composed of ndhH, ndhI, ndhJ, ndhK, ndhL, ndhM, ndhN and ndhO.

Its subcellular location is the plastid. The protein resides in the chloroplast thylakoid membrane. The enzyme catalyses a plastoquinone + NADH + (n+1) H(+)(in) = a plastoquinol + NAD(+) + n H(+)(out). The catalysed reaction is a plastoquinone + NADPH + (n+1) H(+)(in) = a plastoquinol + NADP(+) + n H(+)(out). Its function is as follows. NDH shuttles electrons from NAD(P)H:plastoquinone, via FMN and iron-sulfur (Fe-S) centers, to quinones in the photosynthetic chain and possibly in a chloroplast respiratory chain. The immediate electron acceptor for the enzyme in this species is believed to be plastoquinone. Couples the redox reaction to proton translocation, and thus conserves the redox energy in a proton gradient. The protein is NAD(P)H-quinone oxidoreductase subunit M, chloroplastic of Arabidopsis thaliana (Mouse-ear cress).